The sequence spans 419 residues: Testin (419 aa).

Residues 92–199 (MILTNPVAAK…GDVKLPSEMN (108 aa)) form the PET domain. 2 disordered regions span residues 133–164 (EKQPVAGSEGAQYRKKQLAKQLPAHDQDPSKC) and 199–222 (NAQGDKVHNPAGDRNTPAAVGSKD). The span at 155-164 (PAHDQDPSKC) shows a compositional bias: basic and acidic residues. LIM zinc-binding domains lie at 232-295 (YSCY…CDSE), 297-357 (PRCA…NHAV), and 360-419 (QGCH…KMMS).

Belongs to the prickle / espinas / testin family. As to quaternary structure, interacts via LIM domain 1 with ZYX. Interacts (via LIM domain 3) with ENAH and VASP. Interacts with ALKBH4, talin, actin, alpha-actinin, GRIP1 and PXN. Interacts (via LIM domain 2) with ACTL7A (via N-terminus). Heterodimer with ACTL7A; the heterodimer interacts with ENAH to form a heterotrimer.

Its subcellular location is the cytoplasm. It localises to the cell junction. The protein localises to the focal adhesion. Its function is as follows. Scaffold protein that may play a role in cell adhesion, cell spreading and in the reorganization of the actin cytoskeleton. Plays a role in the regulation of cell proliferation. May act as a tumor suppressor. The protein is Testin (Tes) of Rattus norvegicus (Rat).